The following is a 553-amino-acid chain: Cytokine-like nuclear factor N-PAC (553 aa).

In terms of domain architecture, PWWP spans 8-66 (LGDLVWGKLGRYPPWPGKIVNPPKDLKKPRGKKCFFVKFFGTEDHAWIKVEQLKPYHAH). Composition is skewed to basic and acidic residues over residues 92-145 (RAKG…EGKK) and 162-182 (RAQE…KDLS). The segment at 92–190 (RAKGKDQTSS…LSIPESSTVK (99 aa)) is disordered. A Phosphoserine modification is found at S130. Residue K135 forms a Glycyl lysine isopeptide (Lys-Gly) (interchain with G-Cter in SUMO2) linkage. S167 carries the phosphoserine modification. Residues 168 to 180 (PRKRGRPPKDEKD) constitute a DNA-binding region (a.T hook). Residues K176, K179, K201, and K211 each participate in a glycyl lysine isopeptide (Lys-Gly) (interchain with G-Cter in SUMO2) cross-link. An interaction with histone H3 region spans residues 214 to 217 (DPHF). The segment at 216–225 (HFHHFLLSQT) is interaction with KDM1B. Residues K227, K237, K240, and K269 each participate in a glycyl lysine isopeptide (Lys-Gly) (interchain with G-Cter in SUMO2) cross-link. Positions 261–553 (GSVTPTDKKI…MSAVYRAYIH (293 aa)) are dehydrogenase domain. NAD(+) is bound at residue 271-285 (GFLGLGLMGSGIVSN). Residue K302 forms a Glycyl lysine isopeptide (Lys-Gly) (interchain with G-Cter in SUMO2) linkage. Residues T362 and K505 each contribute to the NAD(+) site. S540 carries the post-translational modification Phosphoserine.

This sequence belongs to the HIBADH-related family. NP60 subfamily. Homotetramere. Interacts with MAPK14. Interacts with KDM1B at nucleosomes; this interaction stimulates H3K4me1 and H3K4me2 demethylation. Binds to mononucleosomes. Interacts with GATA4; the interaction is required for a synergistic activation of GATA4 target genes transcription.

The protein localises to the nucleus. It is found in the chromosome. Cytokine-like nuclear factor with chromatin gene reader activity involved in chromatin modification and regulation of gene expression. Acts as a nucleosome-destabilizing factor that is recruited to genes during transcriptional activation. Recognizes and binds histone H3 without a preference for specific epigenetic markers and also binds DNA. Interacts with KDM1B and promotes its histone demethylase activity by facilitating the capture of H3 tails, they form a multifunctional enzyme complex that modifies transcribed chromatin and facilitates Pol II transcription through nucleosomes. Stimulates the acetylation of 'Lys-56' of nucleosomal histone H3 (H3K56ac) by EP300. With GATA4, co-binds a defined set of heart development genes and coregulates their expression during cardiomyocyte differentiation. Regulates p38 MAP kinase activity by mediating stress activation of MAPK14/p38alpha and specifically regulating MAPK14 signaling. Indirectly promotes phosphorylation of MAPK14 and activation of ATF2. The phosphorylation of MAPK14 requires upstream activity of MAP2K4 and MAP2K6. In Bos taurus (Bovine), this protein is Cytokine-like nuclear factor N-PAC (GLYR1).